A 335-amino-acid polypeptide reads, in one-letter code: Tetraacyldisaccharide 4'-kinase (335 aa).

58–65 contacts ATP; it reads VVGGSGKT.

This sequence belongs to the LpxK family.

It catalyses the reaction a lipid A disaccharide + ATP = a lipid IVA + ADP + H(+). It functions in the pathway glycolipid biosynthesis; lipid IV(A) biosynthesis; lipid IV(A) from (3R)-3-hydroxytetradecanoyl-[acyl-carrier-protein] and UDP-N-acetyl-alpha-D-glucosamine: step 6/6. Functionally, transfers the gamma-phosphate of ATP to the 4'-position of a tetraacyldisaccharide 1-phosphate intermediate (termed DS-1-P) to form tetraacyldisaccharide 1,4'-bis-phosphate (lipid IVA). This chain is Tetraacyldisaccharide 4'-kinase, found in Hydrogenovibrio crunogenus (strain DSM 25203 / XCL-2) (Thiomicrospira crunogena).